The primary structure comprises 605 residues: Elongation factor 4 (605 aa).

In terms of domain architecture, tr-type G spans 9-192 (GMIRNFCIIA…AIVARVPAPA (184 aa)). GTP-binding positions include 21–26 (DHGKST) and 139–142 (NKID).

It belongs to the TRAFAC class translation factor GTPase superfamily. Classic translation factor GTPase family. LepA subfamily.

Its subcellular location is the cell inner membrane. The catalysed reaction is GTP + H2O = GDP + phosphate + H(+). Required for accurate and efficient protein synthesis under certain stress conditions. May act as a fidelity factor of the translation reaction, by catalyzing a one-codon backward translocation of tRNAs on improperly translocated ribosomes. Back-translocation proceeds from a post-translocation (POST) complex to a pre-translocation (PRE) complex, thus giving elongation factor G a second chance to translocate the tRNAs correctly. Binds to ribosomes in a GTP-dependent manner. The sequence is that of Elongation factor 4 from Chlorobaculum tepidum (strain ATCC 49652 / DSM 12025 / NBRC 103806 / TLS) (Chlorobium tepidum).